The chain runs to 369 residues: Histidine decarboxylase (369 aa).

Residue His-119 participates in substrate binding. Lys-230 carries the post-translational modification N6-(pyridoxal phosphate)lysine.

This sequence belongs to the group II decarboxylase family. Homotetramer. Pyridoxal 5'-phosphate is required as a cofactor.

It carries out the reaction L-histidine + H(+) = histamine + CO2. The polypeptide is Histidine decarboxylase (Mesorhizobium japonicum (strain LMG 29417 / CECT 9101 / MAFF 303099) (Mesorhizobium loti (strain MAFF 303099))).